The chain runs to 333 residues: Holliday junction branch migration complex subunit RuvB (333 aa).

Residues 1–181 (MTRILDNDLI…FGITGHMEYY (181 aa)) are large ATPase domain (RuvB-L). ATP-binding positions include leucine 20, arginine 21, glycine 62, lysine 65, threonine 66, threonine 67, 128 to 130 (EDF), arginine 171, tyrosine 181, and arginine 218. Threonine 66 lines the Mg(2+) pocket. The interval 182 to 252 (QTADLTEIVE…ITDKALTMLD (71 aa)) is small ATPAse domain (RuvB-S). The interval 255-333 (QEGLDYVDQK…HLGYPYEKKH (79 aa)) is head domain (RuvB-H). DNA contacts are provided by arginine 291, arginine 310, arginine 312, and arginine 315.

It belongs to the RuvB family. As to quaternary structure, homohexamer. Forms an RuvA(8)-RuvB(12)-Holliday junction (HJ) complex. HJ DNA is sandwiched between 2 RuvA tetramers; dsDNA enters through RuvA and exits via RuvB. An RuvB hexamer assembles on each DNA strand where it exits the tetramer. Each RuvB hexamer is contacted by two RuvA subunits (via domain III) on 2 adjacent RuvB subunits; this complex drives branch migration. In the full resolvosome a probable DNA-RuvA(4)-RuvB(12)-RuvC(2) complex forms which resolves the HJ.

The protein resides in the cytoplasm. It carries out the reaction ATP + H2O = ADP + phosphate + H(+). The RuvA-RuvB-RuvC complex processes Holliday junction (HJ) DNA during genetic recombination and DNA repair, while the RuvA-RuvB complex plays an important role in the rescue of blocked DNA replication forks via replication fork reversal (RFR). RuvA specifically binds to HJ cruciform DNA, conferring on it an open structure. The RuvB hexamer acts as an ATP-dependent pump, pulling dsDNA into and through the RuvAB complex. RuvB forms 2 homohexamers on either side of HJ DNA bound by 1 or 2 RuvA tetramers; 4 subunits per hexamer contact DNA at a time. Coordinated motions by a converter formed by DNA-disengaged RuvB subunits stimulates ATP hydrolysis and nucleotide exchange. Immobilization of the converter enables RuvB to convert the ATP-contained energy into a lever motion, pulling 2 nucleotides of DNA out of the RuvA tetramer per ATP hydrolyzed, thus driving DNA branch migration. The RuvB motors rotate together with the DNA substrate, which together with the progressing nucleotide cycle form the mechanistic basis for DNA recombination by continuous HJ branch migration. Branch migration allows RuvC to scan DNA until it finds its consensus sequence, where it cleaves and resolves cruciform DNA. This chain is Holliday junction branch migration complex subunit RuvB, found in Streptococcus equi subsp. zooepidemicus (strain MGCS10565).